Reading from the N-terminus, the 108-residue chain is CRISPR-associated endoribonuclease Cas2 (108 aa).

Mg(2+) is bound at residue aspartate 15.

Belongs to the CRISPR-associated endoribonuclease Cas2 protein family. Homodimer, forms a heterotetramer with a Cas1 homodimer. Mg(2+) serves as cofactor.

In terms of biological role, CRISPR (clustered regularly interspaced short palindromic repeat), is an adaptive immune system that provides protection against mobile genetic elements (viruses, transposable elements and conjugative plasmids). CRISPR clusters contain sequences complementary to antecedent mobile elements and target invading nucleic acids. CRISPR clusters are transcribed and processed into CRISPR RNA (crRNA). Functions as a ssRNA-specific endoribonuclease. Involved in the integration of spacer DNA into the CRISPR cassette. The sequence is that of CRISPR-associated endoribonuclease Cas2 from Paracidovorax avenae (strain ATCC 19860 / DSM 7227 / CCUG 15838 / JCM 20985 / LMG 2117 / NCPPB 1011) (Acidovorax avenae).